We begin with the raw amino-acid sequence, 656 residues long: uncharacterized protein (656 aa).

Residues 623–656 (EIDIPGTPASIDPEWSRPPGSITDDHVFDAPLHR) are disordered. Residues 645-656 (TDDHVFDAPLHR) are compositionally biased toward basic and acidic residues.

This is an uncharacterized protein from Mycobacterium tuberculosis (strain CDC 1551 / Oshkosh).